We begin with the raw amino-acid sequence, 226 residues long: Uridylate kinase (226 aa).

Position 9–10 (9–10) interacts with ATP; that stretch reads GS. Gly46 contacts UMP. Positions 47 and 51 each coordinate ATP. Residues Asp68 and 116–122 contribute to the UMP site; that span reads THPGHTT. ATP-binding residues include Thr142, Asn143, Tyr148, and Asp151.

Belongs to the UMP kinase family. Homohexamer.

It is found in the cytoplasm. The enzyme catalyses UMP + ATP = UDP + ADP. It functions in the pathway pyrimidine metabolism; CTP biosynthesis via de novo pathway; UDP from UMP (UMPK route): step 1/1. Its activity is regulated as follows. Inhibited by UTP. In terms of biological role, catalyzes the reversible phosphorylation of UMP to UDP. This Methanocaldococcus jannaschii (strain ATCC 43067 / DSM 2661 / JAL-1 / JCM 10045 / NBRC 100440) (Methanococcus jannaschii) protein is Uridylate kinase.